The sequence spans 296 residues: Phosphatidylglycerol--prolipoprotein diacylglyceryl transferase (296 aa).

The next 3 membrane-spanning stretches (helical) occupy residues 17–37, 59–79, and 97–117; these read LAVR…IVVG, MMFY…VLFY, and GGMS…LFAW. Arginine 142 lines the a 1,2-diacyl-sn-glycero-3-phospho-(1'-sn-glycerol) pocket. 2 helical membrane-spanning segments follow: residues 230 to 250 and 257 to 277; these read MGAV…TVEF and FLGL…PMIL.

It belongs to the Lgt family.

The protein localises to the cell inner membrane. The enzyme catalyses L-cysteinyl-[prolipoprotein] + a 1,2-diacyl-sn-glycero-3-phospho-(1'-sn-glycerol) = an S-1,2-diacyl-sn-glyceryl-L-cysteinyl-[prolipoprotein] + sn-glycerol 1-phosphate + H(+). It functions in the pathway protein modification; lipoprotein biosynthesis (diacylglyceryl transfer). Its function is as follows. Catalyzes the transfer of the diacylglyceryl group from phosphatidylglycerol to the sulfhydryl group of the N-terminal cysteine of a prolipoprotein, the first step in the formation of mature lipoproteins. This chain is Phosphatidylglycerol--prolipoprotein diacylglyceryl transferase, found in Burkholderia lata (strain ATCC 17760 / DSM 23089 / LMG 22485 / NCIMB 9086 / R18194 / 383).